We begin with the raw amino-acid sequence, 113 residues long: U11-theraphotoxin-Hhn1a (113 aa).

The N-terminal stretch at 1–21 (MNTVRVTFLLVFVLAVSLGQA) is a signal peptide. Residues 22–74 (DKDENRMEMQEKTEQGESYLDFAENLLLQKLEELEAKLLEEDSEESRNSRQKR) constitute a propeptide that is removed on maturation. Disulfide bonds link cysteine 75-cysteine 90, cysteine 82-cysteine 95, and cysteine 89-cysteine 110.

It belongs to the neurotoxin 14 (magi-1) family. 01 (HNTX-16) subfamily. In terms of tissue distribution, expressed by the venom gland.

The protein resides in the secreted. Probable ion channel inhibitor. This chain is U11-theraphotoxin-Hhn1a, found in Cyriopagopus hainanus (Chinese bird spider).